The following is a 263-amino-acid chain: Hydroxyethylthiazole kinase 1 (263 aa).

Met42 lines the substrate pocket. Residues Lys118 and Thr164 each coordinate ATP. Gly191 contributes to the substrate binding site.

It belongs to the Thz kinase family. The cofactor is Mg(2+).

The catalysed reaction is 5-(2-hydroxyethyl)-4-methylthiazole + ATP = 4-methyl-5-(2-phosphooxyethyl)-thiazole + ADP + H(+). Its pathway is cofactor biosynthesis; thiamine diphosphate biosynthesis; 4-methyl-5-(2-phosphoethyl)-thiazole from 5-(2-hydroxyethyl)-4-methylthiazole: step 1/1. Its function is as follows. Catalyzes the phosphorylation of the hydroxyl group of 4-methyl-5-beta-hydroxyethylthiazole (THZ). In Clostridium botulinum (strain Kyoto / Type A2), this protein is Hydroxyethylthiazole kinase 1.